Consider the following 62-residue polypeptide: DNA gyrase inhibitor YacG (62 aa).

Residues Cys9, Cys12, Cys27, and Cys31 each contribute to the Zn(2+) site. Over residues 43–52 (GYRIPGEKAP) the composition is skewed to basic and acidic residues. The interval 43-62 (GYRIPGEKAPESGGEEPGDE) is disordered.

Belongs to the DNA gyrase inhibitor YacG family. As to quaternary structure, interacts with GyrB. The cofactor is Zn(2+).

Its function is as follows. Inhibits all the catalytic activities of DNA gyrase by preventing its interaction with DNA. Acts by binding directly to the C-terminal domain of GyrB, which probably disrupts DNA binding by the gyrase. In Geobacter sp. (strain M21), this protein is DNA gyrase inhibitor YacG.